A 634-amino-acid chain; its full sequence is Chaperone protein HtpG (634 aa).

The segment at M1 to R342 is a; substrate-binding. Residues E343–Q559 form a b region. Residues L560–V634 are c.

It belongs to the heat shock protein 90 family. As to quaternary structure, homodimer.

Its subcellular location is the cytoplasm. Its function is as follows. Molecular chaperone. Has ATPase activity. This Xanthomonas oryzae pv. oryzae (strain MAFF 311018) protein is Chaperone protein HtpG.